The chain runs to 938 residues: Inner tegument protein (938 aa).

The tract at residues 457-938 (EIVDLLFSST…LVEPLLLKLG (482 aa)) is interaction with large tegument protein.

It belongs to the herpesviridae inner tegument protein family. As to quaternary structure, interacts (via C-terminus) with the large tegument protein/LTP (via N-terminus).

The protein resides in the virion tegument. The protein localises to the host cytoplasm. It is found in the host nucleus. Its subcellular location is the host Golgi apparatus. It localises to the host trans-Golgi network. In terms of biological role, plays an essential role in cytoplasmic secondary envelopment during viral egress. Interacts with the capsid via the large tegument protein/LTP and participates in its transport to the host trans-Golgi network (TGN) where secondary envelopment occurs. Modulates tegumentation and capsid accumulation at the viral assembly complex. This chain is Inner tegument protein (U30), found in Human herpesvirus 7 (strain JI) (HHV-7).